The chain runs to 434 residues: Tol-Pal system protein TolB (434 aa).

A signal peptide spans 1–21 (MTVRRALALAALALAVSPALA). Residues 411 to 434 (GDRQTPVTSGKTDLAAPAWGPLAP) are disordered.

It belongs to the TolB family. The Tol-Pal system is composed of five core proteins: the inner membrane proteins TolA, TolQ and TolR, the periplasmic protein TolB and the outer membrane protein Pal. They form a network linking the inner and outer membranes and the peptidoglycan layer.

The protein localises to the periplasm. In terms of biological role, part of the Tol-Pal system, which plays a role in outer membrane invagination during cell division and is important for maintaining outer membrane integrity. The chain is Tol-Pal system protein TolB from Anaeromyxobacter dehalogenans (strain 2CP-1 / ATCC BAA-258).